The primary structure comprises 271 residues: Probable ribosomal RNA small subunit methyltransferase A (271 aa).

S-adenosyl-L-methionine contacts are provided by histidine 19, leucine 21, glycine 46, glutamate 67, aspartate 92, and asparagine 107.

It belongs to the class I-like SAM-binding methyltransferase superfamily. rRNA adenine N(6)-methyltransferase family. RsmA subfamily.

It localises to the cytoplasm. In terms of biological role, specifically dimethylates two adjacent adenosines in the loop of a conserved hairpin near the 3'-end of 16S rRNA in the 30S particle. May play a critical role in biogenesis of 30S subunits. This chain is Probable ribosomal RNA small subunit methyltransferase A, found in Methanosarcina mazei (strain ATCC BAA-159 / DSM 3647 / Goe1 / Go1 / JCM 11833 / OCM 88) (Methanosarcina frisia).